The sequence spans 272 residues: Inositol monophosphatase (272 aa).

Glutamate 71, aspartate 90, isoleucine 92, and aspartate 93 together coordinate Mg(2+). Glutamate 71 contributes to the substrate binding site. Residues 92-95 (IDGT), 194-196 (GTA), glutamate 213, and aspartate 220 each bind substrate. Position 220 (aspartate 220) interacts with Mg(2+).

This sequence belongs to the inositol monophosphatase superfamily. The cofactor is Mg(2+).

The protein resides in the cytoplasm. The catalysed reaction is a myo-inositol phosphate + H2O = myo-inositol + phosphate. The enzyme catalyses alpha-D-galactose 1-phosphate + H2O = D-galactose + phosphate. It participates in polyol metabolism; myo-inositol biosynthesis; myo-inositol from D-glucose 6-phosphate: step 2/2. Its activity is regulated as follows. Inhibited by Li(+), Ca(2+) and Mn(2+), but also by Mg(2+) at concentrations above 3 mM. Its function is as follows. Responsible for the provision of inositol required for synthesis of phosphatidylinositol and polyphosphoinositides. Has broad substrate specificity and can use myo-inositol monophosphates, myo-inositol 1,3-diphosphate, myo-inositol 1,4-diphosphate, scyllo-inositol-phosphate, D-galactose 1-phosphate, glucose-1-phosphate, glucose-6-phosphate, fructose-1-phosphate, beta-glycerophosphate, and 2'-AMP as substrates. This is Inositol monophosphatase (impa1) from Dictyostelium discoideum (Social amoeba).